The primary structure comprises 195 residues: CASP-like protein 1B2 (195 aa).

Over 1-25 (MDLEKGKKPSEQAAACRIMQVKDKL) the chain is Cytoplasmic. A helical transmembrane segment spans residues 26–46 (ITLQPVVRACVFLATAVAAVI). Over 47-78 (MGLNKQSYTTVVAIVGTRPVTQTFTAKFKDTP) the chain is Extracellular. A helical membrane pass occupies residues 79–99 (AFVFFVIANAIASGYNLMVLV). Residues 100–114 (TRRILQRRAQSLSVH) lie on the Cytoplasmic side of the membrane. Residues 115 to 135 (LLDMVILTLLATGSATAASMA) traverse the membrane as a helical segment. Over 136 to 160 (QLGKNGNLHARWNPICDKFGSFCNH) the chain is Extracellular. The chain crosses the membrane as a helical span at residues 161–181 (GGIALVSSFIGVALMLALNLL). Topologically, residues 182–195 (SAAANSPRSNVTGQ) are cytoplasmic.

It belongs to the Casparian strip membrane proteins (CASP) family. Homodimer and heterodimers.

It localises to the cell membrane. The protein is CASP-like protein 1B2 of Oryza sativa subsp. indica (Rice).